A 179-amino-acid polypeptide reads, in one-letter code: MPKPSRGPRMCSGPDHERLVLANMSASLFLNKKLRTTEARAKRLRPFAEKLVTLSKRGGLHSRRRALSILRNKAALHELFTNIAPLVEDRNGGYTRITKVGFRSGDGAPMALIELILEPVSARTRGTDTLPDTVIDTGPDSAPDPVPGSEPGSAAGDLPDADTAPADPGESSSNQRVIR.

The disordered stretch occupies residues 127–179; sequence TDTLPDTVIDTGPDSAPDPVPGSEPGSAAGDLPDADTAPADPGESSSNQRVIR. The span at 154-168 shows a compositional bias: low complexity; it reads AAGDLPDADTAPADP. Residues 170 to 179 show a composition bias toward polar residues; sequence ESSSNQRVIR.

The protein belongs to the bacterial ribosomal protein bL17 family. As to quaternary structure, part of the 50S ribosomal subunit. Contacts protein L32.

The protein is Large ribosomal subunit protein bL17 of Tropheryma whipplei (strain TW08/27) (Whipple's bacillus).